We begin with the raw amino-acid sequence, 354 residues long: Malate dehydrogenase 2, peroxisomal (354 aa).

Positions 10-18 (RIARISAHL) are peroxisomal targeting signal PTS2. Residues 49-55 (GAAGGIG) and D75 each bind NAD(+). Substrate contacts are provided by R122 and R128. Residues N135 and 158 to 160 (ISN) each bind NAD(+). 2 residues coordinate substrate: N160 and R194. H218 serves as the catalytic Proton acceptor. Residue M269 coordinates NAD(+).

Belongs to the LDH/MDH superfamily. MDH type 1 family. In terms of assembly, homodimer. As to expression, expressed in rosette leaves.

The protein localises to the peroxisome. It catalyses the reaction (S)-malate + NAD(+) = oxaloacetate + NADH + H(+). Catalyzes a reversible NAD-dependent dehydrogenase reaction involved in central metabolism and redox homeostasis between organelle compartments. Peroxisomal NAD-dependent malate dehydrogenase involved in fatty acid beta-oxidation. Reoxidizes NADH from the beta-oxidation and provides NAD for the conversion of fatty acyl-CoA to acetyl-CoA. Does not participate directly in the glyoxylate cycle. Required for maintenance of photosynthetic rates under photorespiratory conditions, and carbon flow during photorespiration. Supplies NADH reductant to the peroxisomal hydroxypyruvate reductase (HPR), which reduces hydroxypyruvate into glycerate in the photorespiratory cycle. The polypeptide is Malate dehydrogenase 2, peroxisomal (Arabidopsis thaliana (Mouse-ear cress)).